Reading from the N-terminus, the 471-residue chain is Bifunctional protein GlmU (471 aa).

Residues 1-232 form a pyrophosphorylase region; sequence MSDITAVLLA…EEDALAPNDR (232 aa). UDP-N-acetyl-alpha-D-glucosamine is bound by residues 9-12, K23, Q73, 78-79, 102-104, G141, E157, and N230; these read LAAG, GT, and YGD. D104 serves as a coordination point for Mg(2+). Residue N230 participates in Mg(2+) binding. The tract at residues 233-253 is linker; that stretch reads VELARAEARLRRQINERHMRN. The tract at residues 254 to 471 is N-acetyltransferase; sequence GVTIINPDAT…RQRKMNREGT (218 aa). 2 residues coordinate UDP-N-acetyl-alpha-D-glucosamine: R335 and K353. H365 (proton acceptor) is an active-site residue. 2 residues coordinate UDP-N-acetyl-alpha-D-glucosamine: Y368 and N379. Residues A382, 388-389, A425, and R444 each bind acetyl-CoA; that span reads NY.

The protein in the N-terminal section; belongs to the N-acetylglucosamine-1-phosphate uridyltransferase family. This sequence in the C-terminal section; belongs to the transferase hexapeptide repeat family. In terms of assembly, homotrimer. It depends on Mg(2+) as a cofactor.

It is found in the cytoplasm. The enzyme catalyses alpha-D-glucosamine 1-phosphate + acetyl-CoA = N-acetyl-alpha-D-glucosamine 1-phosphate + CoA + H(+). The catalysed reaction is N-acetyl-alpha-D-glucosamine 1-phosphate + UTP + H(+) = UDP-N-acetyl-alpha-D-glucosamine + diphosphate. Its pathway is nucleotide-sugar biosynthesis; UDP-N-acetyl-alpha-D-glucosamine biosynthesis; N-acetyl-alpha-D-glucosamine 1-phosphate from alpha-D-glucosamine 6-phosphate (route II): step 2/2. The protein operates within nucleotide-sugar biosynthesis; UDP-N-acetyl-alpha-D-glucosamine biosynthesis; UDP-N-acetyl-alpha-D-glucosamine from N-acetyl-alpha-D-glucosamine 1-phosphate: step 1/1. It participates in bacterial outer membrane biogenesis; LPS lipid A biosynthesis. Its function is as follows. Catalyzes the last two sequential reactions in the de novo biosynthetic pathway for UDP-N-acetylglucosamine (UDP-GlcNAc). The C-terminal domain catalyzes the transfer of acetyl group from acetyl coenzyme A to glucosamine-1-phosphate (GlcN-1-P) to produce N-acetylglucosamine-1-phosphate (GlcNAc-1-P), which is converted into UDP-GlcNAc by the transfer of uridine 5-monophosphate (from uridine 5-triphosphate), a reaction catalyzed by the N-terminal domain. This is Bifunctional protein GlmU from Symbiobacterium thermophilum (strain DSM 24528 / JCM 14929 / IAM 14863 / T).